The following is a 504-amino-acid chain: NADH-quinone oxidoreductase subunit N (504 aa).

Helical transmembrane passes span 9-29, 38-58, 78-98, 114-134, 135-155, 164-184, 216-236, 254-274, 282-302, 309-329, 341-361, 392-412, 425-447, and 476-496; these read IALLPIIVIGITIVGIMLSII, AVLTIIGMIIASVSSLLHMMW, VLYVILIMFVGIASSILGYVW, LLIASIGGILLVITNHLIVLF, LGIELISISICGLISYPVFSK, YIILSGVSSSFLLFGIVFIYC, IVIGLSMMMIGMGFKLSCVPF, YLATGSKIAVTAVLMRFLLIL, LHIFLSVSACCSMLFGSLMAI, RMLAYSSITNAGYLLIALIAL, ISVYLVSYLFANVGVWGIVNI, VIFVIAILSLAGIPMTFGFIG, LWFLTVMMIISSIISMFYYLKII, and FMVIIVAIIILFFGVYPQFIV.

This sequence belongs to the complex I subunit 2 family. In terms of assembly, NDH-1 is composed of 13 different subunits. Subunits NuoA, H, J, K, L, M, N constitute the membrane sector of the complex.

It localises to the cell inner membrane. The catalysed reaction is a quinone + NADH + 5 H(+)(in) = a quinol + NAD(+) + 4 H(+)(out). Its function is as follows. NDH-1 shuttles electrons from NADH, via FMN and iron-sulfur (Fe-S) centers, to quinones in the respiratory chain. The immediate electron acceptor for the enzyme in this species is believed to be ubiquinone. Couples the redox reaction to proton translocation (for every two electrons transferred, four hydrogen ions are translocated across the cytoplasmic membrane), and thus conserves the redox energy in a proton gradient. The protein is NADH-quinone oxidoreductase subunit N of Blochmanniella floridana.